The primary structure comprises 185 residues: Ribosome-recycling factor (185 aa).

Belongs to the RRF family.

It localises to the cytoplasm. Responsible for the release of ribosomes from messenger RNA at the termination of protein biosynthesis. May increase the efficiency of translation by recycling ribosomes from one round of translation to another. This Nitrosomonas europaea (strain ATCC 19718 / CIP 103999 / KCTC 2705 / NBRC 14298) protein is Ribosome-recycling factor.